The following is a 308-amino-acid chain: Ava biosynthesis cluster protein O (308 aa).

The protein operates within secondary metabolite biosynthesis. In terms of biological role, part of the cluster that mediates the biosynthesis of a highly modified cyclo-arginine-tryptophan dipeptide (cRW). The first step of the pathway is perfornmed by the arginine-containing cyclodipeptide synthase (RCPDS) avaA that acts as the scaffold-generating enzyme and is responsible for formation of the cyclo-Arg-Trp (cRW) diketopiperazine. AvaB then acts as a multifunctional flavoenzyme that is responsible for generating the cyclo-Arg-formylkynurenine DKP, which can be deformylated by avaC. AvaB then further catalyzes an additional N-oxidation followed by cyclization and dehydration. The next step is an N-acetylation of the guanidine group catalyzed by the arginine N-acetyltransferase avaD. The roles of the additional enzymes identified within the ava cluster still have to be determined. This is Ava biosynthesis cluster protein O from Aspergillus versicolor.